The primary structure comprises 224 residues: Retinoschisin (224 aa).

The signal sequence occupies residues 1–23 (MSRKIEGFLLLLLFGYEATLGLS). The F5/8 type C domain occupies 63–219 (CPYHKPLGFE…IAIRMELLEC (157 aa)). Cystine bridges form between C63–C219 and C110–C142.

In terms of assembly, homooctamer of 4 homodimers; disulfide-linked. The homooctamer has a flat, cogwheel structure with a diameter of about 14 nm. Two stacked octamers can assemble to form a hexadecamer. As to expression, restricted to the retina (at protein level). Detected in the inner segment of the photoreceptors, the inner nuclear layer, the inner plexiform layer and the ganglion cell layer (at protein level). At the macula, expressed in both the outer and inner nuclear layers and in the inner plexiform layer (at protein level). Detected in retina. Detected only within the photoreceptor cell layer, most prominently within the inner segments of the photoreceptors. Undetectable in the inner plexiform layers and the inner nuclear layer.

It is found in the secreted. The protein resides in the cell membrane. In terms of biological role, binds negatively charged membrane lipids, such as phosphatidylserine and phosphoinositides. May play a role in cell-cell adhesion processes in the retina, via homomeric interaction between octamers present on the surface of two neighboring cells. Required for normal structure and function of the retina. The polypeptide is Retinoschisin (RS1) (Homo sapiens (Human)).